A 1373-amino-acid chain; its full sequence is Actin cytoskeleton-regulatory complex protein PAN1 (1373 aa).

The EH 1 domain maps to 116–205 (DQKKFEHLFR…EKWANEVKSF (90 aa)). Positions 149–184 (LTPVTLAEIWSLSDTNKSGSLLFPEFALSLHLCSMA) constitute an EF-hand 1 domain. Disordered regions lie at residues 271 to 362 (GGGL…QQQS) and 385 to 409 (AQRT…QPTG). 2 stretches are compositionally biased toward low complexity: residues 290–309 (TTSF…PLAS) and 341–362 (PQQL…QQQS). The span at 389-408 (GPLQSQSTGFQPAPLQSQPT) shows a compositional bias: polar residues. The 90-residue stretch at 465–554 (EKSIYDGIFQ…PELIPPSNKY (90 aa)) folds into the EH 2 domain. The EF-hand 2 domain maps to 498-533 (LSRPDLESIWTLADTSDRGKLNKDEFSVAMHLVYRR). 6 disordered regions span residues 562-622 (MKNS…SSSD), 739-758 (SWNP…NGEV), 876-914 (QNSS…RTPE), 931-1089 (RLAK…TAED), 1103-1335 (EAVP…APPV), and 1349-1373 (GKSL…TVLS). Over residues 571-580 (NNKSYSGGKQ) the composition is skewed to polar residues. Residues 581-590 (TKSDGTRFKN) show a composition bias toward basic and acidic residues. Positions 739–752 (SWNPDSNESEIQGT) are enriched in polar residues. Composition is skewed to low complexity over residues 878–909 (SSSL…ASSS) and 965–977 (PAVV…SPPV). Positions 1007–1066 (DDEEYAAILKQKQQLEAKEKERKLAKQKQKQARLDKIKKEMEEIKRRQAEAEAEEDSDEE) form a coiled coil. Basic and acidic residues-rich tracts occupy residues 1019-1030 (QQLEAKEKERKL) and 1038-1056 (ARLD…RQAE). A compositionally biased stretch (acidic residues) spans 1057 to 1067 (AEAEEDSDEEP). 2 stretches are compositionally biased toward polar residues: residues 1070–1079 (VPTYTVSNSA) and 1118–1134 (NPFS…STNP). Residues 1139 to 1149 (TTKESTIDPKK) are compositionally biased toward basic and acidic residues. Positions 1154–1166 (RASQRGLSKNDGW) are enriched in polar residues. Acidic residues predominate over residues 1167–1177 (SDSDDNESEDD). The segment covering 1250–1326 (PPIPTEVPPI…PPPPGPPPPV (77 aa)) has biased composition (pro residues). One can recognise a WH2 domain in the interval 1338 to 1355 (DIGALLGQIQGGKSLKKV). The span at 1357–1373 (ASQQKISSNDLAGTVLS) shows a compositional bias: polar residues.

This sequence belongs to the PAN1 family. Component of the PAN1 actin cytoskeleton-regulatory complex.

It localises to the cell membrane. It is found in the endosome membrane. Its subcellular location is the cytoplasm. The protein resides in the cytoskeleton. The protein localises to the actin patch. In terms of biological role, component of the PAN1 actin cytoskeleton-regulatory complex required for the internalization of endosomes during actin-coupled endocytosis. The complex links the site of endocytosis to the cell membrane-associated actin cytoskeleton. Mediates uptake of external molecules and vacuolar degradation of plasma membrane proteins. Plays a role in the proper organization of the cell membrane-associated actin cytoskeleton and promotes its destabilization. This Scheffersomyces stipitis (strain ATCC 58785 / CBS 6054 / NBRC 10063 / NRRL Y-11545) (Yeast) protein is Actin cytoskeleton-regulatory complex protein PAN1 (PAN1).